Consider the following 318-residue polypeptide: Dihydroorotate dehydrogenase B (NAD(+)), catalytic subunit (318 aa).

FMN is bound by residues Ser19 and 43 to 44 (KT). Substrate contacts are provided by residues Lys43, 69–73 (NAMGL), and Asn125. Asn125 contacts FMN. The Nucleophile role is filled by Cys128. FMN-binding residues include Lys164 and Val192. 193–194 (NT) is a binding site for substrate. Residues Gly219, 247-248 (GG), and 269-270 (AT) each bind FMN.

The protein belongs to the dihydroorotate dehydrogenase family. Type 1 subfamily. In terms of assembly, heterotetramer of 2 PyrK and 2 PyrD type B subunits. It depends on FMN as a cofactor.

The protein resides in the cytoplasm. The enzyme catalyses (S)-dihydroorotate + NAD(+) = orotate + NADH + H(+). The protein operates within pyrimidine metabolism; UMP biosynthesis via de novo pathway; orotate from (S)-dihydroorotate (NAD(+) route): step 1/1. In terms of biological role, catalyzes the conversion of dihydroorotate to orotate with NAD(+) as electron acceptor. The protein is Dihydroorotate dehydrogenase B (NAD(+)), catalytic subunit (pyrD) of Methanopyrus kandleri (strain AV19 / DSM 6324 / JCM 9639 / NBRC 100938).